A 162-amino-acid polypeptide reads, in one-letter code: MKFFAVLALCVVGAIASPLSADEANLVKSSWDQVKHNEVDILAAVFAAYPDIQAKFPQFAGKDLASIKDTAAFATHATRIVSFFTEVISLSGNQANLSAVYALVSKLGVDHKARGISAAQFGEFRTALVSYLQAHVSWGDNVAAAWNHALDNTYAVALKSLE.

Positions 1–16 are cleaved as a signal peptide; the sequence is MKFFAVLALCVVGAIA. The region spanning 18-162 is the Globin domain; the sequence is PLSADEANLV…TYAVALKSLE (145 aa). The heme b site is built by histidine 76 and histidine 111.

It belongs to the globin family. As to quaternary structure, homodimer.

The sequence is that of Globin CTT-VIIB-7 (CTT-7B7) from Chironomus thummi piger (Midge).